Here is a 479-residue protein sequence, read N- to C-terminus: G-rich sequence factor 1 (479 aa).

Residues 1–116 (MAGTRWVLGA…AAAAGPARGY (116 aa)) constitute a mitochondrion transit peptide. RRM domains are found at residues 149 to 245 (YLIR…PSPV) and 249 to 325 (GVVR…PSRR). S243 carries the phosphoserine modification. S334 is modified (phosphoserine). In terms of domain architecture, RRM 3 spans 400-479 (HFVHMRGLPF…LFLNSCPKGK (80 aa)).

In terms of assembly, monomer. Found in a complex with DDX28, DHX30, FASTKD2 and FASTKD5. Interacts with the mitochondrial RNase P complex subunit TRMT10C/MRPP1. Interacts with the 2 components of the mitochondrial degradosome complex, PNPT1 and SUPV3L1, in an RNA-dependent manner.

It is found in the mitochondrion matrix. Functionally, regulator of post-transcriptional mitochondrial gene expression, required for assembly of the mitochondrial ribosome and for recruitment of mRNA and lncRNA. Binds RNAs containing the 14 base G-rich element. Preferentially binds RNAs transcribed from three contiguous genes on the light strand of mtDNA, the ND6 mRNA, and the long non-coding RNAs for MT-CYB and MT-ND5, each of which contains multiple consensus binding sequences. Involved in the degradosome-mediated decay of non-coding mitochondrial transcripts (MT-ncRNA) and tRNA-like molecules. Acts by unwinding G-quadruplex RNA structures in MT-ncRNA, thus facilitating their degradation by the degradosome. G-quadruplexes (G4) are non-canonical 4 stranded structures formed by transcripts from the light strand of mtDNA. This chain is G-rich sequence factor 1 (Grsf1), found in Mus musculus (Mouse).